Here is a 544-residue protein sequence, read N- to C-terminus: Zinc finger protein 502 (544 aa).

Lys43 participates in a covalent cross-link: Glycyl lysine isopeptide (Lys-Gly) (interchain with G-Cter in SUMO2). C2H2-type zinc fingers lie at residues 155–177 (WKCN…QRTH), 183–205 (YTCE…QRIH), 211–233 (YGCE…QRIH), 239–261 (YKCN…QRIH), 267–289 (YKCN…QRIH), 295–317 (YICS…QRIH), 323–345 (HKCD…QRIH), 351–373 (YKCK…QRIH), 379–401 (YKCK…QRIH), 407–429 (YKCS…QRSH), 435–457 (YKCN…MRIH), 463–485 (YKCK…HRTH), 491–513 (YKCS…YRIH), and 519–541 (YECI…QKLH).

Belongs to the krueppel C2H2-type zinc-finger protein family. In terms of assembly, (Microbial infection) Interacts with human respiratory syncytial virus (HRSV) matrix protein; this interaction probably facilitates viral release.

Its subcellular location is the nucleus. Functionally, may be involved in transcriptional regulation. The polypeptide is Zinc finger protein 502 (ZNF502) (Homo sapiens (Human)).